The following is a 94-amino-acid chain: Co-chaperonin GroES (94 aa).

This sequence belongs to the GroES chaperonin family. As to quaternary structure, heptamer of 7 subunits arranged in a ring. Interacts with the chaperonin GroEL.

It localises to the cytoplasm. Its function is as follows. Together with the chaperonin GroEL, plays an essential role in assisting protein folding. The GroEL-GroES system forms a nano-cage that allows encapsulation of the non-native substrate proteins and provides a physical environment optimized to promote and accelerate protein folding. GroES binds to the apical surface of the GroEL ring, thereby capping the opening of the GroEL channel. The protein is Co-chaperonin GroES of Clostridium botulinum.